The chain runs to 559 residues: Apolipoprotein N-acyltransferase 2 (559 aa).

The next 6 membrane-spanning stretches (helical) occupy residues 27–47, 53–73, 86–106, 114–134, 153–173, and 187–207; these read LAGS…GFLL, HVAC…SFWL, ASTV…ACIL, ACAF…GILA, IADI…NACV, and VPVF…SLYG. Residues 221-507 form the CN hydrolase domain; that stretch reads LALAIVQQNA…SAVLHVPVYP (287 aa). Glu-288 (proton acceptor) is an active-site residue. Lys-358 is an active-site residue. Cys-416 (nucleophile) is an active-site residue. The chain crosses the membrane as a helical span at residues 519–539; the sequence is WVIVLCALIFFAEGVRMAVHT.

It belongs to the CN hydrolase family. Apolipoprotein N-acyltransferase subfamily.

The protein localises to the cell inner membrane. It carries out the reaction N-terminal S-1,2-diacyl-sn-glyceryl-L-cysteinyl-[lipoprotein] + a glycerophospholipid = N-acyl-S-1,2-diacyl-sn-glyceryl-L-cysteinyl-[lipoprotein] + a 2-acyl-sn-glycero-3-phospholipid + H(+). It participates in protein modification; lipoprotein biosynthesis (N-acyl transfer). Its function is as follows. Catalyzes the phospholipid dependent N-acylation of the N-terminal cysteine of apolipoprotein, the last step in lipoprotein maturation. The sequence is that of Apolipoprotein N-acyltransferase 2 from Treponema pallidum (strain Nichols).